We begin with the raw amino-acid sequence, 107 residues long: Sulmotoxin 1 (107 aa).

The signal sequence occupies residues 1–19; the sequence is MKTLLLALAVVVLVCLGSA. Residues 20–34 constitute a propeptide that is removed on maturation; it reads NELGLGRQRVDRRRR. Cystine bridges form between Cys-44–Cys-68, Cys-47–Cys-55, Cys-61–Cys-83, Cys-87–Cys-98, and Cys-99–Cys-104.

The protein belongs to the three-finger toxin family. Ancestral subfamily. Boigatoxin sub-subfamily. Monomer. In terms of tissue distribution, expressed by the venom gland.

The protein resides in the secreted. Mammal-specific neurotoxin (tested on mice). Not toxic to lizards (tested on geckos). The protein is Sulmotoxin 1 of Spilotes sulphureus (Amazon puffing snake).